Here is a 751-residue protein sequence, read N- to C-terminus: Palmitoyltransferase ZDHHC8B (751 aa).

Over 1–13 (MPNSVGKRFKPTK) the chain is Cytoplasmic. Residues 14–34 (YIPVSTAATLLVGSTTLFFVF) form a helical membrane-spanning segment. Over 35 to 41 (TCPWLTK) the chain is Extracellular. A helical transmembrane segment spans residues 42-62 (AVSPVVPLYNGIVFLFVLANF). The Cytoplasmic portion of the chain corresponds to 63 to 148 (SMATFMDPGV…NCIGRRNYRY (86 aa)). The region spanning 104-154 (KWCATCHFYRPPRCSHCSVCDNCVEEFDHHCPWVNNCIGRRNYRYFFLFLL) is the DHHC domain. Cysteine 134 functions as the S-palmitoyl cysteine intermediate in the catalytic mechanism. Residues 149 to 169 (FFLFLLSLSVHMVGVFSFGLL) traverse the membrane as a helical segment. Residues 170 to 185 (FVLHHLETLSALHTTV) are Extracellular-facing. A helical transmembrane segment spans residues 186–206 (TLVVMCVTGLFFIPVMGLTGF). Topologically, residues 207-751 (HMVLVARGRT…VGGTTYEISV (545 aa)) are cytoplasmic. Disordered stretches follow at residues 293–346 (RSKS…PSTP), 437–461 (CTPL…SPGT), 633–659 (RSSA…GMNR), 666–685 (RSPV…SPSY), and 703–736 (HLGT…HTSV). Low complexity predominate over residues 326–338 (SQLTSSEESSLSS). Polar residues-rich tracts occupy residues 633 to 651 (RSSA…TSLH), 669 to 681 (VHQS…SVPR), and 724 to 733 (GTPSGTPSRH).

It belongs to the DHHC palmitoyltransferase family. ERF2/ZDHHC9 subfamily.

The protein resides in the golgi apparatus membrane. Its subcellular location is the mitochondrion membrane. It catalyses the reaction L-cysteinyl-[protein] + hexadecanoyl-CoA = S-hexadecanoyl-L-cysteinyl-[protein] + CoA. Functionally, palmitoyltransferase that catalyzes the addition of palmitate onto various protein substrates and therefore function in several unrelated biological processes. This chain is Palmitoyltransferase ZDHHC8B, found in Danio rerio (Zebrafish).